Here is a 79-residue protein sequence, read N- to C-terminus: UPF0349 protein GTNG_2908 (79 aa).

The protein belongs to the UPF0349 family.

This Geobacillus thermodenitrificans (strain NG80-2) protein is UPF0349 protein GTNG_2908.